A 182-amino-acid polypeptide reads, in one-letter code: Probable RNA 2'-phosphotransferase (182 aa).

The protein belongs to the KptA/TPT1 family.

Removes the 2'-phosphate from RNA via an intermediate in which the phosphate is ADP-ribosylated by NAD followed by a presumed transesterification to release the RNA and generate ADP-ribose 1''-2''-cyclic phosphate (APPR&gt;P). May function as an ADP-ribosylase. This chain is Probable RNA 2'-phosphotransferase, found in Herpetosiphon aurantiacus (strain ATCC 23779 / DSM 785 / 114-95).